The primary structure comprises 715 residues: Nucleolar protein 9 (715 aa).

Residues 1 to 52 (MPKPRGRRVQSAFKERVENSEATHENSIAETGSDVEISLHEDQPQTSDNKNQ) are disordered. The segment covering 13-24 (FKERVENSEATH) has biased composition (basic and acidic residues). Pumilio repeat units follow at residues 99 to 134 (ESRG…HIFH), 135 to 170 (QFLG…EIVN), 206 to 243 (QLEP…TMAN), 291 to 326 (LDTK…RSVW), 340 to 377 (SEEA…RLYR), 379 to 415 (YMKD…HILD), 531 to 568 (LPQE…EVLI), and 575 to 613 (NLFQ…RIAS). A compositionally biased stretch (basic and acidic residues) spans 688–698 (YQEERAKREGE). The interval 688-715 (YQEERAKREGEDLAGSNQKRMKGRGRNR) is disordered. Basic residues predominate over residues 706-715 (KRMKGRGRNR).

It belongs to the NOP9 family.

Its subcellular location is the nucleus. The protein resides in the nucleolus. Its function is as follows. RNA-binding nucleolar protein required for pre-rRNA processing. Involved in production of 18S rRNA and assembly of small ribosomal subunit. This is Nucleolar protein 9 (NOP9) from Clavispora lusitaniae (strain ATCC 42720) (Yeast).